A 146-amino-acid chain; its full sequence is Large ribosomal subunit protein uL15 (146 aa).

The interval 1 to 61 (MELNSLKPAA…GGQMPMHRRL (61 aa)) is disordered. Residues 30–39 (TATKGHKGQK) are compositionally biased toward basic residues.

The protein belongs to the universal ribosomal protein uL15 family. As to quaternary structure, part of the 50S ribosomal subunit.

Its function is as follows. Binds to the 23S rRNA. The polypeptide is Large ribosomal subunit protein uL15 (Geotalea uraniireducens (strain Rf4) (Geobacter uraniireducens)).